The primary structure comprises 238 residues: Probable transcriptional regulatory protein ABC1956 (238 aa).

It belongs to the TACO1 family. YeeN subfamily.

It is found in the cytoplasm. The sequence is that of Probable transcriptional regulatory protein ABC1956 from Shouchella clausii (strain KSM-K16) (Alkalihalobacillus clausii).